The following is a 678-amino-acid chain: Alpha-L-arabinofuranosidase 1 (678 aa).

Positions 1 to 33 (MDMESWKLLRSVCVLSFLLGSCFVYQSLRVVDA) are cleaved as a signal peptide. Residues 152 to 239 (NIEEGKKYKV…WIDQVSAMPV (88 aa)) form the CBM-cenC domain. N-linked (GlcNAc...) asparagine glycans are attached at residues Asn-181, Asn-362, Asn-523, and Asn-555.

The protein belongs to the glycosyl hydrolase 51 family. In terms of tissue distribution, expressed in roots, leaves, flowers, stems, siliques and seedlings. Observed in zones of cell proliferation, the vascular system and floral abscission zones. Expressed in the guard cells in stems, in xylem vessels and parenchyma cells surrounding the vessels, in the cambium and in the phloem, but not in the secondary xylem.

Its subcellular location is the secreted. It is found in the extracellular space. It localises to the extracellular matrix. It carries out the reaction Hydrolysis of terminal non-reducing alpha-L-arabinofuranoside residues in alpha-L-arabinosides.. May be involved in the coordinated dissolution of the cell wall matrix during abscission and in the secondary cell wall formation in xylem vessels. Prefers arabinoxylan, but may also use pectic arabinans as substrates. In Arabidopsis thaliana (Mouse-ear cress), this protein is Alpha-L-arabinofuranosidase 1 (ASD1).